We begin with the raw amino-acid sequence, 491 residues long: MRFLLVLQLVFFYFSAATTNSPKKCSRNSINLGKLIDTLLTDYDTHLLPEAEGVNVTIELHVQGVSGISEITGDFSLDVMYSEIWQDPRLSFKHLNVCATNITLKSDFRKKIWTPDTCIINSKSSSIHSSPSENTFVILYENGLVWSNFRLNVKTPCSVNLKMFPFDSLSCEIVLESYSFNTDEVRLMWHDVPITMMEKVELPDFDLIGWSTDHQRLEYPNGIWDRAKVKFTFARRYGFYLFQSYFPTSLTVISSWVGFFFDVRSVSARITLGVSSLLALTFQFGNVLRHLPRVSYIKCLDVWMIFSVIFIFCTLVELAIVCQLNRWERERQIGSKVLGHWLNQIRKTRKKESKADEGGGGGVGGLLRKRIPVLAQLKAAATDSNSGAATAMTTAIQPPNTNLNSITNSDNSKLVANNFTSIEHETYAYEKKRGFSHCFQRFVYAICPPDRDWTITSVQVDRCSMIMFPLSFLIFNVVYWSIYFMKMDRPM.

The N-terminal stretch at 1-19 (MRFLLVLQLVFFYFSAATT) is a signal peptide. N55 and N101 each carry an N-linked (GlcNAc...) asparagine glycan. C157 and C171 are oxidised to a cystine. Transmembrane regions (helical) follow at residues 241–261 (LFQS…GFFF), 265–287 (SVSA…FGNV), and 302–322 (VWMI…AIVC). N418 carries N-linked (GlcNAc...) asparagine glycosylation. The helical transmembrane segment at 465-485 (MIMFPLSFLIFNVVYWSIYFM) threads the bilayer.

Belongs to the ligand-gated ion channel (TC 1.A.9) family.

It localises to the postsynaptic cell membrane. Its subcellular location is the cell membrane. This Caenorhabditis elegans protein is Ligand-gated ion channel 50 (lgc-50).